Reading from the N-terminus, the 360-residue chain is Phosphoserine aminotransferase (360 aa).

Arg-41 provides a ligand contact to L-glutamate. Pyridoxal 5'-phosphate contacts are provided by residues 75–76 (GR), Trp-101, Thr-152, Asp-172, and Gln-195. N6-(pyridoxal phosphate)lysine is present on Lys-196. Pyridoxal 5'-phosphate is bound at residue 237–238 (NT).

Belongs to the class-V pyridoxal-phosphate-dependent aminotransferase family. SerC subfamily. Homodimer. The cofactor is pyridoxal 5'-phosphate.

Its subcellular location is the cytoplasm. It catalyses the reaction O-phospho-L-serine + 2-oxoglutarate = 3-phosphooxypyruvate + L-glutamate. The catalysed reaction is 4-(phosphooxy)-L-threonine + 2-oxoglutarate = (R)-3-hydroxy-2-oxo-4-phosphooxybutanoate + L-glutamate. The protein operates within amino-acid biosynthesis; L-serine biosynthesis; L-serine from 3-phospho-D-glycerate: step 2/3. Its pathway is cofactor biosynthesis; pyridoxine 5'-phosphate biosynthesis; pyridoxine 5'-phosphate from D-erythrose 4-phosphate: step 3/5. Its function is as follows. Catalyzes the reversible conversion of 3-phosphohydroxypyruvate to phosphoserine and of 3-hydroxy-2-oxo-4-phosphonooxybutanoate to phosphohydroxythreonine. This chain is Phosphoserine aminotransferase, found in Pseudoalteromonas translucida (strain TAC 125).